A 436-amino-acid chain; its full sequence is MAKKMKLSDITNMFAGMDVEALEGVTIEGDIEIDLGGLGGGFDPMLAAALGQESAVLAQHFARIAGMFGYPVGIGAPAAPAISPALAAPKLKDLIPAKFDVANIAEWATQIQEVPIGNTSADGGSRGKRVLVGGEKALPFFPDAPMPNRNQVTIDVFDMRIGLAKAVKENYDEVMDSPGEWAKKNVEKFNADMITIHLISTDPLVKDTPPKEAAKTVEEVLQAVDVPIAIGGSGNPQKDPEVLARAAEVAEGERCLLASASLNLDYAAIAEAALKYDHDVLSWTQLDMNAQKELNRKLMKQCNVPRDRIIMDPTTAALGYGLDYAYTNMERIRLAALMGDDELTFPMSSGTTNAWGARESWMVGSPLKEDSDWGPREYRGPIWEIVTGLSLAIAGNDLFMMMHPTSVAVLKQITQTLFGTIDTEQVDIANWIGAEV.

The protein belongs to the CdhD family. In terms of assembly, heterodimer of delta and gamma chains. The ACDS complex is made up of alpha, epsilon, beta, gamma and delta chains with a probable stoichiometry of (alpha(2)epsilon(2))(4)-beta(8)-(gamma(1)delta(1))(8).

The protein operates within one-carbon metabolism; methanogenesis from acetate. Functionally, part of a complex that catalyzes the reversible cleavage of acetyl-CoA, allowing growth on acetate as sole source of carbon and energy. Probably maintains the overall quaternary structure of the ACDS complex. The sequence is that of Acetyl-CoA decarbonylase/synthase complex subunit delta from Methanosarcina mazei (strain ATCC BAA-159 / DSM 3647 / Goe1 / Go1 / JCM 11833 / OCM 88) (Methanosarcina frisia).